Reading from the N-terminus, the 1185-residue chain is DNA-directed RNA polymerase subunit beta' (1185 aa).

Residues Cys60, Cys62, Cys75, and Cys78 each coordinate Zn(2+). Asp449, Asp451, and Asp453 together coordinate Mg(2+). Zn(2+)-binding residues include Cys774, Cys853, Cys860, and Cys863.

This sequence belongs to the RNA polymerase beta' chain family. As to quaternary structure, the RNAP catalytic core consists of 2 alpha, 1 beta, 1 beta' and 1 omega subunit. When a sigma factor is associated with the core the holoenzyme is formed, which can initiate transcription. Mg(2+) serves as cofactor. Requires Zn(2+) as cofactor.

The enzyme catalyses RNA(n) + a ribonucleoside 5'-triphosphate = RNA(n+1) + diphosphate. Functionally, DNA-dependent RNA polymerase catalyzes the transcription of DNA into RNA using the four ribonucleoside triphosphates as substrates. The protein is DNA-directed RNA polymerase subunit beta' of Desulforamulus reducens (strain ATCC BAA-1160 / DSM 100696 / MI-1) (Desulfotomaculum reducens).